Here is an 862-residue protein sequence, read N- to C-terminus: Pentatricopeptide repeat-containing protein At1g74850, chloroplastic (862 aa).

The transit peptide at 1-66 (MNLAIPNPNS…DLVLGNPSVS (66 aa)) directs the protein to the chloroplast. PPR repeat units lie at residues 104-139 (SLND…WCKP), 140-174 (NEHI…GVSR), 175-209 (SVFS…KISP), 210-245 (SILT…GIQP), 246-280 (DIVT…GIVP), 281-315 (DLTT…GSLP), 316-350 (DITS…GCTP), 351-385 (NANT…NTDP), 386-420 (DAAT…NIEP), 421-455 (DMET…DIVP), 456-490 (SSKA…GSNP), 491-525 (SIET…GIPR), 526-560 (NRDT…RCDP), 561-595 (DERT…DILP), and 596-630 (SIMC…RVSN). The Smr domain maps to 713-801 (VDVHRMSEGG…RIMCQRSQLK (89 aa)). The segment at 831–862 (GTRASTSSDTNHSGNPTQRRTRTKKELAGSTA) is disordered. Residues 833 to 848 (RASTSSDTNHSGNPTQ) show a composition bias toward polar residues.

This sequence belongs to the PPR family. P subfamily. As to expression, mostly expressed in leaves, stems and flowers, but barely in roots.

The protein localises to the plastid. The protein resides in the chloroplast. Its function is as follows. Involved in plastid gene expression. In Arabidopsis thaliana (Mouse-ear cress), this protein is Pentatricopeptide repeat-containing protein At1g74850, chloroplastic (PTAC2).